The primary structure comprises 328 residues: MGSDFKAIPLIDISPLVGKIDDPSMVNDEDLLQVVQMLDDACREAGFFYVKGHGIADSLMKQVRDVTQKFFQLPYEEKLKIKMTPQSGYRGYQRVGENITKGKPDMHEAIDCYTPIEPGKYGDLAKPMVGSNLWPKYPSNFDVLLENYISLLRDLSRKIMRGIALALGAPVDAFEGTTAGDPFWVCRLIGYPVSTDIPEEQRTDTGCGAHTDYGLLTLVNQDDDICALEVRNQSGEWIYAKPIPGTFVCNIGDMLKVWSNGIYQPTLHRVVNNSPRYRVSVAFFYESNFDAAVEPVEFCRERTGGVAKYEKVVYGEHLVQKVLTNFVM.

The region spanning Phe183–Asn288 is the Fe2OG dioxygenase domain. Fe cation contacts are provided by His210, Asp212, and His268. Residue Arg278 coordinates 2-oxoglutarate.

It belongs to the iron/ascorbate-dependent oxidoreductase family. It depends on Fe(2+) as a cofactor. L-ascorbate serves as cofactor. Expressed in roots and shoots.

The protein localises to the cytoplasm. It carries out the reaction L-homoarginine + 2-oxoglutarate + O2 = 6-hydroxy-L-homoarginine + succinate + CO2. The enzyme catalyses melatonin + 2-oxoglutarate + O2 = 2-hydroxymelatonin + succinate + CO2. 2-oxoglutarate-dependent dioxygenase catalyzing homoarginine 6-hydroxylation thus producing 6-hydroxy-L-homoarginine. Guanidine (Gd) is in turn synthesized by the spontaneous conversion of 6-hydroxy-L-homoarginine to (S)-2-amino-6-oxohexanoate (RHEA:79843); guanidine is a nitrogen-rich compound that can serve as a defense or signaling substance. Involved in melatonin degradation. Catalyzes the hydroxylation of melatonin to produce 2-hydroxymelatonin. The chain is Homoarginine-6-hydroxylase 2-ODD-233 from Oryza sativa subsp. japonica (Rice).